The following is a 484-amino-acid chain: HSPB1-associated protein 1 (484 aa).

The tract at residues 1–26 (MAARPGAITNADSASGGGEEEGKHVK) is disordered. An interaction with HSPB1 region spans residues 88–208 (ETACNYVEAT…EDTPFLYPTR (121 aa)). The region spanning 124–288 (WAYADYKYFV…HQTRVEEAIT (165 aa)) is the JmjC domain. The tract at residues 396-429 (TPSSEEPSSERGGIFENDGEDFVSKNGKSFGKRQ) is disordered.

As to quaternary structure, interacts with CRYAB and HSPB1.

The protein resides in the cytoplasm. In terms of biological role, may play a role in cellular stress response. The sequence is that of HSPB1-associated protein 1 (HSPBAP1) from Bos taurus (Bovine).